Here is a 314-residue protein sequence, read N- to C-terminus: Lipoyl synthase (314 aa).

Residues 1 to 24 (MMDTPIIRHPEKVRRPDNPSPRKP) form a disordered region. Positions 53, 58, 64, 79, 83, 86, and 293 each coordinate [4Fe-4S] cluster. In terms of domain architecture, Radical SAM core spans 65 to 282 (WKRRHATFMI…ADIARGKGFL (218 aa)). Residues 294 to 308 (HHADRDFEDLRKARQ) are compositionally biased toward basic and acidic residues. The disordered stretch occupies residues 294–314 (HHADRDFEDLRKARQDAAATK).

This sequence belongs to the radical SAM superfamily. Lipoyl synthase family. [4Fe-4S] cluster is required as a cofactor.

The protein localises to the cytoplasm. It catalyses the reaction [[Fe-S] cluster scaffold protein carrying a second [4Fe-4S](2+) cluster] + N(6)-octanoyl-L-lysyl-[protein] + 2 oxidized [2Fe-2S]-[ferredoxin] + 2 S-adenosyl-L-methionine + 4 H(+) = [[Fe-S] cluster scaffold protein] + N(6)-[(R)-dihydrolipoyl]-L-lysyl-[protein] + 4 Fe(3+) + 2 hydrogen sulfide + 2 5'-deoxyadenosine + 2 L-methionine + 2 reduced [2Fe-2S]-[ferredoxin]. The protein operates within protein modification; protein lipoylation via endogenous pathway; protein N(6)-(lipoyl)lysine from octanoyl-[acyl-carrier-protein]: step 2/2. Catalyzes the radical-mediated insertion of two sulfur atoms into the C-6 and C-8 positions of the octanoyl moiety bound to the lipoyl domains of lipoate-dependent enzymes, thereby converting the octanoylated domains into lipoylated derivatives. The sequence is that of Lipoyl synthase from Rhodospirillum rubrum (strain ATCC 11170 / ATH 1.1.1 / DSM 467 / LMG 4362 / NCIMB 8255 / S1).